Here is a 302-residue protein sequence, read N- to C-terminus: Ribose-5-phosphate isomerase (302 aa).

It belongs to the ribose 5-phosphate isomerase family.

It is found in the cytoplasm. It carries out the reaction aldehydo-D-ribose 5-phosphate = D-ribulose 5-phosphate. Its pathway is carbohydrate degradation; pentose phosphate pathway; D-ribose 5-phosphate from D-ribulose 5-phosphate (non-oxidative stage): step 1/1. This chain is Ribose-5-phosphate isomerase (RKI1), found in Cryptococcus neoformans var. neoformans serotype D (strain B-3501A) (Filobasidiella neoformans).